Here is a 339-residue protein sequence, read N- to C-terminus: Inositol 2-dehydrogenase (339 aa).

Belongs to the Gfo/Idh/MocA family. In terms of assembly, homotetramer.

It carries out the reaction myo-inositol + NAD(+) = scyllo-inosose + NADH + H(+). Involved in the oxidation of myo-inositol (MI) to 2-keto-myo-inositol (2KMI or 2-inosose). The protein is Inositol 2-dehydrogenase of Leifsonia xyli subsp. xyli (strain CTCB07).